The following is a 252-amino-acid chain: Protein PYRAB15930 (252 aa).

It belongs to the CinA family.

The chain is Protein PYRAB15930 from Pyrococcus abyssi (strain GE5 / Orsay).